The chain runs to 542 residues: 4-coumarate--CoA ligase-like 5 (542 aa).

Serine 204, serine 205, glycine 206, threonine 207, threonine 208, and lysine 212 together coordinate ATP. Position 262 (phenylalanine 262) interacts with (E)-4-coumaroyl-AMP. Arginine 282 is a binding site for CoA. Residues 284 to 353 form an SBD1 region; that stretch reads DFIAALRAIE…SVFPNVELVQ (70 aa). Glycine 331, glutamine 353, glycine 354, and threonine 358 together coordinate (E)-4-coumaroyl-AMP. ATP contacts are provided by glutamine 353, glycine 354, threonine 358, aspartate 418, and arginine 433. The segment at 354–397 is SBD2; that stretch reads GYGLTESSGAVAATVGPEESKAYGSVGKLGSHLQAKIVDPSTGY. Positions 435 and 439 each coordinate (E)-4-coumaroyl-AMP. 2 residues coordinate CoA: lysine 441 and glycine 442. Lysine 524 contacts ATP.

Belongs to the ATP-dependent AMP-binding enzyme family. Mg(2+) is required as a cofactor.

It carries out the reaction (E)-4-coumarate + ATP + CoA = (E)-4-coumaroyl-CoA + AMP + diphosphate. The enzyme catalyses (E)-4-coumarate + ATP + H(+) = (E)-4-coumaroyl-AMP + diphosphate. It catalyses the reaction (E)-4-coumaroyl-AMP + CoA = (E)-4-coumaroyl-CoA + AMP + H(+). Functionally, carboxylate--CoA ligase that may use 4-coumarate as substrate. Follows a two-step reaction mechanism, wherein the carboxylate substrate first undergoes adenylation by ATP, followed by a thioesterification in the presence of CoA to yield the final CoA thioester. This chain is 4-coumarate--CoA ligase-like 5 (4CLL5), found in Oryza sativa subsp. japonica (Rice).